Consider the following 356-residue polypeptide: UDP-N-acetylglucosamine--N-acetylmuramyl-(pentapeptide) pyrophosphoryl-undecaprenol N-acetylglucosamine transferase (356 aa).

Residues 12–14 (TGG), asparagine 124, arginine 163, serine 188, isoleucine 242, 261–266 (ALTVSE), and glutamine 287 each bind UDP-N-acetyl-alpha-D-glucosamine.

It belongs to the glycosyltransferase 28 family. MurG subfamily.

Its subcellular location is the cell inner membrane. The catalysed reaction is di-trans,octa-cis-undecaprenyl diphospho-N-acetyl-alpha-D-muramoyl-L-alanyl-D-glutamyl-meso-2,6-diaminopimeloyl-D-alanyl-D-alanine + UDP-N-acetyl-alpha-D-glucosamine = di-trans,octa-cis-undecaprenyl diphospho-[N-acetyl-alpha-D-glucosaminyl-(1-&gt;4)]-N-acetyl-alpha-D-muramoyl-L-alanyl-D-glutamyl-meso-2,6-diaminopimeloyl-D-alanyl-D-alanine + UDP + H(+). It participates in cell wall biogenesis; peptidoglycan biosynthesis. Its function is as follows. Cell wall formation. Catalyzes the transfer of a GlcNAc subunit on undecaprenyl-pyrophosphoryl-MurNAc-pentapeptide (lipid intermediate I) to form undecaprenyl-pyrophosphoryl-MurNAc-(pentapeptide)GlcNAc (lipid intermediate II). The protein is UDP-N-acetylglucosamine--N-acetylmuramyl-(pentapeptide) pyrophosphoryl-undecaprenol N-acetylglucosamine transferase of Azotobacter vinelandii (strain DJ / ATCC BAA-1303).